A 224-amino-acid chain; its full sequence is Uracil-DNA glycosylase (224 aa).

Catalysis depends on D64, which acts as the Proton acceptor.

The protein belongs to the uracil-DNA glycosylase (UDG) superfamily. UNG family.

It is found in the cytoplasm. It catalyses the reaction Hydrolyzes single-stranded DNA or mismatched double-stranded DNA and polynucleotides, releasing free uracil.. Excises uracil residues from the DNA which can arise as a result of misincorporation of dUMP residues by DNA polymerase or due to deamination of cytosine. The chain is Uracil-DNA glycosylase from Geobacillus sp. (strain WCH70).